The following is a 406-amino-acid chain: Renin (406 aa).

A signal peptide spans 1–23; the sequence is MDGWRRMPRWGLLLLLWGSCTFG. Residues 24–66 constitute a propeptide, activation peptide; the sequence is LPTDTTTFKRIFLKRMPSIRESLKERGVDMARLGPEWSQPMKR. N-linked (GlcNAc...) asparagine glycosylation is present at Asn71. Residues 86–403 form the Peptidase A1 domain; that stretch reads YYGEIGIGTP…DRRNNRIGFA (318 aa). The active site involves Asp104. The cysteines at positions 117 and 124 are disulfide-linked. A glycan (N-linked (GlcNAc...) asparagine) is linked at Asn141. A disulfide bridge links Cys283 with Cys287. Asp292 is an active-site residue. Cysteines 325 and 362 form a disulfide.

It belongs to the peptidase A1 family. Interacts with ATP6AP2.

It localises to the secreted. The protein resides in the membrane. The enzyme catalyses Cleavage of Leu-|-Xaa bond in angiotensinogen to generate angiotensin I.. With respect to regulation, interaction with ATP6AP2 results in a 5-fold increased efficiency in angiotensinogen processing. Functionally, renin is a highly specific endopeptidase, whose only known function is to generate angiotensin I from angiotensinogen in the plasma, initiating a cascade of reactions that produce an elevation of blood pressure and increased sodium retention by the kidney. The sequence is that of Renin (REN) from Macaca mulatta (Rhesus macaque).